The following is a 202-amino-acid chain: dTTP/UTP pyrophosphatase (202 aa).

Catalysis depends on Asp71, which acts as the Proton acceptor.

Belongs to the Maf family. YhdE subfamily. It depends on a divalent metal cation as a cofactor.

The protein resides in the cytoplasm. It carries out the reaction dTTP + H2O = dTMP + diphosphate + H(+). It catalyses the reaction UTP + H2O = UMP + diphosphate + H(+). Its function is as follows. Nucleoside triphosphate pyrophosphatase that hydrolyzes dTTP and UTP. May have a dual role in cell division arrest and in preventing the incorporation of modified nucleotides into cellular nucleic acids. This is dTTP/UTP pyrophosphatase from Zymomonas mobilis subsp. mobilis (strain ATCC 31821 / ZM4 / CP4).